The sequence spans 56 residues: Large ribosomal subunit protein bL33 (56 aa).

Belongs to the bacterial ribosomal protein bL33 family.

The sequence is that of Large ribosomal subunit protein bL33 (rpmG) from Rickettsia prowazekii (strain Madrid E).